Reading from the N-terminus, the 393-residue chain is Iripin-3 (393 aa).

Residues 1-16 (MKVITAFLSVFVLCSA) form the signal peptide. 2 N-linked (GlcNAc...) asparagine glycosylation sites follow: N104 and N265.

It belongs to the serpin family. Interacts with human KLKB1. Interacts with human ST14. Interacts with human F2 (thrombin). Saliva (at protein level). Expressed in salivary gland. Expressed in ovary during blood feeding.

The protein resides in the secreted. Its function is as follows. Serine protease inhibitor that modulates blood feeding of ticks on vertebrate species. Moderately inhibits host plasma kallikrein (KLKB1), matriptase (ST14), trypsin, plasmin (PLG), thrombin (F2) and coagulation factor VIIa (F7). Slightly inhibits host alpha-chymotrypsin, tPA/tissue-type plasminogen activator (PLAT), uPA/urokinase-type plasminogen activator (PLAU) and coagulation factor XIIa (F12). Slightly inhibits the extrinsic pathway while not affecting the intrinsic and common pathways of host blood coagulation. Decreases synthesis and secretion of IL6 by mouse bone marrow-derived macrophages. Decreases viability of mouse B- and T-cells. Decreases proliferation of mouse CD4+ T-cells in response to stimulation. Inhibits Th1 immune responses in mouse cells. Promotes differentiation of mouse regulatory T-cells. This Ixodes ricinus (Common tick) protein is Iripin-3.